We begin with the raw amino-acid sequence, 469 residues long: ATP synthase subunit beta (469 aa).

155–162 (GGAGVGKT) is a binding site for ATP.

The protein belongs to the ATPase alpha/beta chains family. In terms of assembly, F-type ATPases have 2 components, CF(1) - the catalytic core - and CF(0) - the membrane proton channel. CF(1) has five subunits: alpha(3), beta(3), gamma(1), delta(1), epsilon(1). CF(0) has three main subunits: a(1), b(2) and c(9-12). The alpha and beta chains form an alternating ring which encloses part of the gamma chain. CF(1) is attached to CF(0) by a central stalk formed by the gamma and epsilon chains, while a peripheral stalk is formed by the delta and b chains.

It localises to the cell inner membrane. It catalyses the reaction ATP + H2O + 4 H(+)(in) = ADP + phosphate + 5 H(+)(out). Produces ATP from ADP in the presence of a proton gradient across the membrane. The catalytic sites are hosted primarily by the beta subunits. The protein is ATP synthase subunit beta of Thermosipho melanesiensis (strain DSM 12029 / CIP 104789 / BI429).